The primary structure comprises 486 residues: Protein kinase C and casein kinase substrate in neurons protein 2 (486 aa).

The 272-residue stretch at 11 to 282 folds into the F-BAR domain; the sequence is VEVSSDSFWE…SIKAADAVED (272 aa). The stretch at 25–274 forms a coiled coil; it reads KRTVKRIDDG…TIYRELEQSI (250 aa). An N6-acetyllysine modification is found at Lys-53. Ser-273 is modified (phosphoserine). Phosphoserine; by PKC is present on Ser-313. The disordered stretch occupies residues 315 to 426; the sequence is REKKKAVDGV…NPFDEDTTSG (112 aa). Positions 327 to 362 are enriched in polar residues; the sequence is TGINQTGDQSGQNKPGSNLSVPSNPAQSTQLQSSYN. The short motif at 362-364 is the NPF1 element; the sequence is NPF. Phosphoserine; by IKKB is present on Ser-373. Over residues 384–396 the composition is skewed to polar residues; that stretch reads NVSSYEKTQTYPT. Ser-399 carries the post-translational modification Phosphoserine. Residues 404–416 show a composition bias toward polar residues; sequence NNPFSSTDANGDS. Positions 405–407 match the NPF2 motif; that stretch reads NPF. The NPF3 signature appears at 417-419; sequence NPF. An SH3 domain is found at 426–486; it reads GTEVRVRALY…YPANYVEAIQ (61 aa). The residue at position 446 (Ser-446) is a Phosphoserine.

Belongs to the PACSIN family. As to quaternary structure, homodimer. May form heterooligomers with other PACSINs. Interacts (via NPF motifs) with EHD1 (via EH domain). Interacts (via NPF motifs) with EHD2 (via EH domain); this interaction probably stabilizes the caveolae. Interacts with EHD3. Interacts (via the SH3 domain) with MICALL1. Interacts with RAC1. Interacts (via SH3 domain) with DNM1, SYN1, SYNJ1 and WASL. Interacts (via F-BAR domain) with CAV1; this interaction induces membrane tubulation. Interacts with TRPV4. Forms a complex with EHD4 and MICALL1; the complex controls CDH5 trafficking and coordinates angiogenesis. In terms of processing, phosphorylated by casein kinase 2 (CK2). Phosphorylation by PKC probably decreases the membrane binding and tubulation capacities of PACSIN2, thereby modulating the lifetime of caveolae. Widely expressed (at protein level).

The protein localises to the cytoplasm. The protein resides in the cytoskeleton. It is found in the cytoplasmic vesicle membrane. Its subcellular location is the cell projection. It localises to the ruffle membrane. The protein localises to the early endosome. The protein resides in the recycling endosome membrane. It is found in the cell membrane. Its subcellular location is the membrane. It localises to the caveola. The protein localises to the cell junction. The protein resides in the adherens junction. In terms of biological role, regulates the morphogenesis and endocytosis of caveolae. Lipid-binding protein that is able to promote the tubulation of the phosphatidic acid-containing membranes it preferentially binds. Plays a role in intracellular vesicle-mediated transport. Involved in the endocytosis of cell-surface receptors like the EGF receptor, contributing to its internalization in the absence of EGF stimulus. Essential for endothelial organization in sprouting angiogenesis, modulates CDH5-based junctions. Facilitates endothelial front-rear polarity during migration by recruiting EHD4 and MICALL1 to asymmetric adherens junctions between leader and follower cells. The sequence is that of Protein kinase C and casein kinase substrate in neurons protein 2 (Pacsin2) from Mus musculus (Mouse).